A 368-amino-acid chain; its full sequence is Phosphoserine aminotransferase (368 aa).

Residue Arg44 coordinates L-glutamate. Residues 78-79 (AT), Trp104, Thr157, Asp179, and Gln202 each bind pyridoxal 5'-phosphate. Position 203 is an N6-(pyridoxal phosphate)lysine (Lys203). 244–245 (NT) serves as a coordination point for pyridoxal 5'-phosphate.

This sequence belongs to the class-V pyridoxal-phosphate-dependent aminotransferase family. SerC subfamily. As to quaternary structure, homodimer. Pyridoxal 5'-phosphate serves as cofactor.

It is found in the cytoplasm. The catalysed reaction is O-phospho-L-serine + 2-oxoglutarate = 3-phosphooxypyruvate + L-glutamate. The enzyme catalyses 4-(phosphooxy)-L-threonine + 2-oxoglutarate = (R)-3-hydroxy-2-oxo-4-phosphooxybutanoate + L-glutamate. Its pathway is amino-acid biosynthesis; L-serine biosynthesis; L-serine from 3-phospho-D-glycerate: step 2/3. The protein operates within cofactor biosynthesis; pyridoxine 5'-phosphate biosynthesis; pyridoxine 5'-phosphate from D-erythrose 4-phosphate: step 3/5. Catalyzes the reversible conversion of 3-phosphohydroxypyruvate to phosphoserine and of 3-hydroxy-2-oxo-4-phosphonooxybutanoate to phosphohydroxythreonine. This Neisseria meningitidis serogroup B (strain ATCC BAA-335 / MC58) protein is Phosphoserine aminotransferase.